A 2372-amino-acid chain; its full sequence is NBAS subunit of NRZ tethering complex (2372 aa).

2 WD repeats span residues 119–158 and 304–343; these read DPNP…LFII and GEQD…LRGS. A disordered region spans residues 447-468; sequence LESSVKGEEDDGDDDSDSDEEA. Residues 454–467 show a composition bias toward acidic residues; sequence EEDDGDDDSDSDEE. Residues 629-668 are a coiled coil; the sequence is YEDFLSMEEELEQRKERESKKRQELLKKVDFSKLTLEQKE.

The protein resides in the endoplasmic reticulum. In terms of biological role, involved in Golgi-to-endoplasmic reticulum (ER) retrograde transport; the function is proposed to depend on its association in the NRZ complex which is believed to play a role in SNARE assembly at the ER. Required for normal embryonic development. May play a role in the nonsense-mediated decay pathway of mRNAs containing premature stop codons. The sequence is that of NBAS subunit of NRZ tethering complex from Danio rerio (Zebrafish).